A 196-amino-acid polypeptide reads, in one-letter code: Protease (196 aa).

Residues His54, Asp70, and Cys121 contribute to the active site.

The protein belongs to the peptidase C5 family. Interacts with protease cofactor pVI-C; this interaction is necessary for protease activation.

It is found in the virion. The protein localises to the host nucleus. It catalyses the reaction Cleaves proteins of the adenovirus and its host cell at two consensus sites: -Yaa-Xaa-Gly-Gly-|-Xaa- and -Yaa-Xaa-Gly-Xaa-|-Gly- (in which Yaa is Met, Ile or Leu, and Xaa is any amino acid).. With respect to regulation, requires DNA and protease cofactor for maximal activation. Inside nascent virions, becomes partially activated by binding to the viral DNA, allowing it to cleave the cofactor that binds to the protease and fully activates it. Actin, like the viral protease cofactor, seems to act as a cofactor in the cleavage of cytokeratin 18 and of actin itself. In terms of biological role, cleaves viral precursor proteins (pTP, pIIIa, pVI, pVII, pVIII, and pX) inside newly assembled particles giving rise to mature virions. Protease complexed to its cofactor slides along the viral DNA to specifically locate and cleave the viral precursors. Mature virions have a weakened organization compared to the unmature virions, thereby facilitating subsequent uncoating. Without maturation, the particle lacks infectivity and is unable to uncoat. Late in adenovirus infection, in the cytoplasm, may participate in the cytoskeleton destruction. Cleaves host cell cytoskeletal keratins K7 and K18. The sequence is that of Protease from Bos taurus (Bovine).